The primary structure comprises 412 residues: Short-chain specific acyl-CoA dehydrogenase, mitochondrial (412 aa).

The transit peptide at 1 to 24 (MAAALLARAGGSLGRALRARDWRR) directs the protein to the mitochondrion. Position 27 is a phosphothreonine (Thr27). The residue at position 51 (Lys51) is an N6-acetyllysine; alternate. Lys51 carries the N6-succinyllysine; alternate modification. An N6-acetyllysine modification is found at Lys72. Lys129 is subject to N6-acetyllysine; alternate. N6-succinyllysine; alternate is present on Lys129. FAD is bound by residues 152-161 (FALSEPGNGS) and 185-187 (WIT). Ser161 serves as a coordination point for substrate. Position 208 is an N6-acetyllysine (Lys208). Lys262 carries the N6-acetyllysine; alternate modification. Lys262 is modified (N6-succinyllysine; alternate). 269–272 (DMGR) is a substrate binding site. Lys292 is subject to N6-acetyllysine. FAD is bound at residue Arg297. N6-acetyllysine; alternate is present on Lys306. N6-succinyllysine; alternate is present on Lys306. Residue 365–369 (QILGG) participates in FAD binding. Glu392 serves as the catalytic Proton acceptor. 394 to 396 (TSE) provides a ligand contact to FAD.

Belongs to the acyl-CoA dehydrogenase family. As to quaternary structure, homotetramer. FAD serves as cofactor.

The protein localises to the mitochondrion matrix. The enzyme catalyses a short-chain 2,3-saturated fatty acyl-CoA + oxidized [electron-transfer flavoprotein] + H(+) = a short-chain (2E)-enoyl-CoA + reduced [electron-transfer flavoprotein]. The catalysed reaction is butanoyl-CoA + oxidized [electron-transfer flavoprotein] + H(+) = (2E)-butenoyl-CoA + reduced [electron-transfer flavoprotein]. It catalyses the reaction pentanoyl-CoA + oxidized [electron-transfer flavoprotein] + H(+) = (2E)-pentenoyl-CoA + reduced [electron-transfer flavoprotein]. It carries out the reaction hexanoyl-CoA + oxidized [electron-transfer flavoprotein] + H(+) = (2E)-hexenoyl-CoA + reduced [electron-transfer flavoprotein]. Its pathway is lipid metabolism; mitochondrial fatty acid beta-oxidation. In terms of biological role, short-chain specific acyl-CoA dehydrogenase is one of the acyl-CoA dehydrogenases that catalyze the first step of mitochondrial fatty acid beta-oxidation, an aerobic process breaking down fatty acids into acetyl-CoA and allowing the production of energy from fats. The first step of fatty acid beta-oxidation consists in the removal of one hydrogen from C-2 and C-3 of the straight-chain fatty acyl-CoA thioester, resulting in the formation of trans-2-enoyl-CoA. Among the different mitochondrial acyl-CoA dehydrogenases, short-chain specific acyl-CoA dehydrogenase acts specifically on acyl-CoAs with saturated 4 to 6 carbons long primary chains. The protein is Short-chain specific acyl-CoA dehydrogenase, mitochondrial (Acads) of Rattus norvegicus (Rat).